Reading from the N-terminus, the 1412-residue chain is DNA-directed RNA polymerase subunit beta' (1412 aa).

Zn(2+) contacts are provided by cysteine 71, cysteine 73, cysteine 86, and cysteine 89. Residues aspartate 461, aspartate 463, and aspartate 465 each contribute to the Mg(2+) site. Zn(2+) contacts are provided by cysteine 815, cysteine 889, cysteine 896, and cysteine 899.

Belongs to the RNA polymerase beta' chain family. In terms of assembly, the RNAP catalytic core consists of 2 alpha, 1 beta, 1 beta' and 1 omega subunit. When a sigma factor is associated with the core the holoenzyme is formed, which can initiate transcription. Requires Mg(2+) as cofactor. It depends on Zn(2+) as a cofactor.

It carries out the reaction RNA(n) + a ribonucleoside 5'-triphosphate = RNA(n+1) + diphosphate. Functionally, DNA-dependent RNA polymerase catalyzes the transcription of DNA into RNA using the four ribonucleoside triphosphates as substrates. The protein is DNA-directed RNA polymerase subunit beta' of Actinobacillus pleuropneumoniae serotype 5b (strain L20).